Consider the following 1215-residue polypeptide: Zinc finger E-box-binding homeobox 2 (1215 aa).

The tract at residues 1–111 (MKQPIMADGP…ILQASVAGPE (111 aa)) is disordered. Over residues 12–24 (CKRRKQANPRRKN) the composition is skewed to basic residues. Residues 57–74 (DQDTSPASMPNHESSPHM) are compositionally biased toward polar residues. Basic and acidic residues predominate over residues 89–98 (RESVVEHSWH). S142 carries the phosphoserine modification. C2H2-type zinc fingers lie at residues 211-234 (LTCP…KYRH), 241-263 (FSCP…MVTH), and 282-304 (FKCT…LRIH). Residues 310–334 (YECPNCKKRFSHSGSYSSHISSKKC) form a C2H2-type 4; atypical zinc finger. Residues S356, S360, and S364 each carry the phosphoserine modification. The residue at position 377 (K377) is an N6-acetyllysine. Residue K391 forms a Glycyl lysine isopeptide (Lys-Gly) (interchain with G-Cter in SUMO); alternate linkage. Residue K391 forms a Glycyl lysine isopeptide (Lys-Gly) (interchain with G-Cter in SUMO2); alternate linkage. The interval 437–487 (QHLGVGMEAPLLGFPTMNSNLSEVQKVLQIVDNTVSRQKMDCKTEDISKLK) is SMAD-MH2 binding domain. Glycyl lysine isopeptide (Lys-Gly) (interchain with G-Cter in SUMO2) cross-links involve residues K479 and K555. Residues 581–605 (FSCQFCKESFPGPIPLHQHERYLCK) form a C2H2-type 5; degenerate zinc finger. Glycyl lysine isopeptide (Lys-Gly) (interchain with G-Cter in SUMO2) cross-links involve residues K611 and K632. Residues 644–703 (GLTSPINPYKDHMSVLKAYYAMNMEPNSDELLKISIAVGLPQEFVKEWFEQRKVYQYSNS) constitute a DNA-binding region (homeobox; atypical). At S647 the chain carries Phosphoserine. 2 disordered regions span residues 702–740 (NSRS…DSIT) and 772–811 (VDKL…SEEL). K713 participates in a covalent cross-link: Glycyl lysine isopeptide (Lys-Gly) (interchain with G-Cter in SUMO2). 2 positions are modified to phosphoserine: S731 and S780. Positions 780–808 (SNTPSPLNLSSTSSKNSHSSSYTPNSFSS) are enriched in low complexity. T782 is subject to Phosphothreonine. S784 bears the Phosphoserine mark. K866 participates in a covalent cross-link: Glycyl lysine isopeptide (Lys-Gly) (interchain with G-Cter in SUMO); alternate. K866 participates in a covalent cross-link: Glycyl lysine isopeptide (Lys-Gly) (interchain with G-Cter in SUMO2); alternate. C2H2-type zinc fingers lie at residues 999–1021 (YACD…KYEH) and 1027–1049 (HQCQ…SRLH). The C2H2-type 8; atypical zinc-finger motif lies at 1055–1076 (YQCDKCGKRFSHSGSYSQHMNH). Positions 1117–1215 (TPQGYSDSEE…EEDNMEDGME (99 aa)) are disordered. S1122 and S1124 each carry phosphoserine. Over residues 1127 to 1149 (RESMPRDGESEKEHEKEGEEGYG) the composition is skewed to basic and acidic residues. Residues 1157–1167 (DEEEEEEEEES) are compositionally biased toward acidic residues. Composition is skewed to basic and acidic residues over residues 1168-1179 (ENKSMDTDPETI) and 1186-1205 (GDHS…KSDH). At S1203 the chain carries Phosphoserine. The segment covering 1206–1215 (EEDNMEDGME) has biased composition (acidic residues).

The protein belongs to the delta-EF1/ZFH-1 C2H2-type zinc-finger family. In terms of assembly, interacts with CBX4 and CTBP1. Binds activated SMAD1, activated SMAD2 and activated SMAD3; binding with SMAD4 is not detected. Post-translationally, sumoylation on Lys-391 and Lys-866 is promoted by the E3 SUMO-protein ligase CBX4, and impairs interaction with CTBP1 and transcription repression activity.

The protein resides in the nucleus. It localises to the chromosome. Transcriptional inhibitor that binds to DNA sequence 5'-CACCT-3' in different promoters. Represses transcription of E-cadherin. Represses expression of MEOX2. This chain is Zinc finger E-box-binding homeobox 2 (Zeb2), found in Mus musculus (Mouse).